A 415-amino-acid chain; its full sequence is Protein PIN-LIKES 4 (415 aa).

Residues Met-1 to Pro-13 lie on the Lumenal side of the membrane. Residues Val-14–Leu-34 form a helical membrane-spanning segment. Residues Leu-35–Asn-44 lie on the Cytoplasmic side of the membrane. The helical transmembrane segment at Asn-45–Ala-61 threads the bilayer. The Lumenal segment spans residues Asp-62 to Met-75. Residues Pro-76 to Ile-96 traverse the membrane as a helical segment. The Cytoplasmic portion of the chain corresponds to Thr-97–Leu-106. A helical transmembrane segment spans residues Ile-107 to Ile-127. Over Cys-128 to Lys-143 the chain is Lumenal. The chain crosses the membrane as a helical span at residues Tyr-144–Tyr-161. The Cytoplasmic segment spans residues Lys-162 to Asn-244. The chain crosses the membrane as a helical span at residues Leu-245–Ile-265. Topologically, residues Thr-266 to Ser-285 are lumenal. The chain crosses the membrane as a helical span at residues Leu-286–Leu-306. At Lys-307–Ser-322 the chain is on the cytoplasmic side. A helical transmembrane segment spans residues Cys-323–Val-343. The Lumenal segment spans residues Arg-344 to Glu-355. A helical transmembrane segment spans residues Pro-356 to Thr-376. The Cytoplasmic portion of the chain corresponds to Lys-377–Ser-389. A helical membrane pass occupies residues Val-390–Phe-410. The Lumenal portion of the chain corresponds to Met-411 to Thr-415.

Belongs to the auxin efflux carrier (TC 2.A.69.2) family. In terms of tissue distribution, expressed in seedlings, rosette and cauline leaves, stems, flowers and siliques.

Its subcellular location is the endoplasmic reticulum membrane. In terms of biological role, involved in cellular auxin homeostasis by regulating auxin metabolism. Regulates intracellular auxin accumulation at the endoplasmic reticulum and thus auxin availability for nuclear auxin signaling. This Arabidopsis thaliana (Mouse-ear cress) protein is Protein PIN-LIKES 4.